Here is a 239-residue protein sequence, read N- to C-terminus: Pre-mRNA-splicing factor isy1 (239 aa).

This sequence belongs to the ISY1 family. As to quaternary structure, associated with the spliceosome.

The protein localises to the cytoplasm. Its subcellular location is the nucleus. In terms of biological role, involved in pre-mRNA splicing. This chain is Pre-mRNA-splicing factor isy1 (msp-7), found in Neurospora crassa (strain ATCC 24698 / 74-OR23-1A / CBS 708.71 / DSM 1257 / FGSC 987).